The following is a 308-amino-acid chain: tRNA dimethylallyltransferase (308 aa).

10–17 (GPTGVGKT) serves as a coordination point for ATP. 12–17 (TGVGKT) contacts substrate. Positions 35–38 (DSRQ) are interaction with substrate tRNA.

This sequence belongs to the IPP transferase family. Monomer. Mg(2+) serves as cofactor.

The catalysed reaction is adenosine(37) in tRNA + dimethylallyl diphosphate = N(6)-dimethylallyladenosine(37) in tRNA + diphosphate. Its function is as follows. Catalyzes the transfer of a dimethylallyl group onto the adenine at position 37 in tRNAs that read codons beginning with uridine, leading to the formation of N6-(dimethylallyl)adenosine (i(6)A). In Fervidobacterium nodosum (strain ATCC 35602 / DSM 5306 / Rt17-B1), this protein is tRNA dimethylallyltransferase.